The sequence spans 446 residues: Exodeoxyribonuclease 7 large subunit (446 aa).

The protein belongs to the XseA family. As to quaternary structure, heterooligomer composed of large and small subunits.

The protein localises to the cytoplasm. It carries out the reaction Exonucleolytic cleavage in either 5'- to 3'- or 3'- to 5'-direction to yield nucleoside 5'-phosphates.. Functionally, bidirectionally degrades single-stranded DNA into large acid-insoluble oligonucleotides, which are then degraded further into small acid-soluble oligonucleotides. The protein is Exodeoxyribonuclease 7 large subunit of Streptococcus pneumoniae serotype 19F (strain G54).